Here is a 368-residue protein sequence, read N- to C-terminus: Endoglucanase (368 aa).

The signal sequence occupies residues 1-21 (MNVLRSGLVTMLLLAAFSVQA). The active-site Proton donor is the Glu-55. Catalysis depends on Asp-116, which acts as the Nucleophile.

Belongs to the glycosyl hydrolase 8 (cellulase D) family.

The protein localises to the secreted. It catalyses the reaction Endohydrolysis of (1-&gt;4)-beta-D-glucosidic linkages in cellulose, lichenin and cereal beta-D-glucans.. The protein operates within glycan metabolism; bacterial cellulose biosynthesis. Hydrolyzes carboxymethylcellulose. In Escherichia coli O157:H7, this protein is Endoglucanase (bcsZ).